The sequence spans 555 residues: Phosphomethylpyrimidine synthase (555 aa).

The interval 78-104 (VRDRWGFDNGSAESTKGELSMSERKPR) is disordered. Residues Asn-191, Met-220, Tyr-249, His-285, 305-307 (SRG), 346-349 (DALR), and Glu-385 contribute to the substrate site. His-389 provides a ligand contact to Zn(2+). Tyr-412 contacts substrate. His-453 serves as a coordination point for Zn(2+). 3 residues coordinate [4Fe-4S] cluster: Cys-535, Cys-538, and Cys-543.

It belongs to the ThiC family. [4Fe-4S] cluster serves as cofactor.

The enzyme catalyses 5-amino-1-(5-phospho-beta-D-ribosyl)imidazole + S-adenosyl-L-methionine = 4-amino-2-methyl-5-(phosphooxymethyl)pyrimidine + CO + 5'-deoxyadenosine + formate + L-methionine + 3 H(+). The protein operates within cofactor biosynthesis; thiamine diphosphate biosynthesis. Functionally, catalyzes the synthesis of the hydroxymethylpyrimidine phosphate (HMP-P) moiety of thiamine from aminoimidazole ribotide (AIR) in a radical S-adenosyl-L-methionine (SAM)-dependent reaction. This chain is Phosphomethylpyrimidine synthase, found in Chlorobaculum parvum (strain DSM 263 / NCIMB 8327) (Chlorobium vibrioforme subsp. thiosulfatophilum).